The primary structure comprises 934 residues: Serine/threonine-protein kinase PknD (934 aa).

Residues 4–296 (YELIRLIGKG…ELRQALQPYL (293 aa)) form the Protein kinase domain. Residues 10 to 18 (IGKGGMGEV) and K33 each bind ATP. The Proton acceptor role is filled by D138.

Belongs to the protein kinase superfamily. Ser/Thr protein kinase family. Interacts with Pkn1. In terms of processing, autophosphorylated on serine and threonine residues.

It catalyses the reaction L-seryl-[protein] + ATP = O-phospho-L-seryl-[protein] + ADP + H(+). It carries out the reaction L-threonyl-[protein] + ATP = O-phospho-L-threonyl-[protein] + ADP + H(+). Functionally, together with the serine/threonine kinase Pkn1, may play a role in the specific interactions with host proteins during intracellular growth. Autophosphorylates and also phosphorylates Pkn1. In Chlamydia trachomatis serovar D (strain ATCC VR-885 / DSM 19411 / UW-3/Cx), this protein is Serine/threonine-protein kinase PknD.